A 569-amino-acid chain; its full sequence is Proline--tRNA ligase (569 aa).

The protein belongs to the class-II aminoacyl-tRNA synthetase family. ProS type 1 subfamily. As to quaternary structure, homodimer.

The protein resides in the cytoplasm. The catalysed reaction is tRNA(Pro) + L-proline + ATP = L-prolyl-tRNA(Pro) + AMP + diphosphate. In terms of biological role, catalyzes the attachment of proline to tRNA(Pro) in a two-step reaction: proline is first activated by ATP to form Pro-AMP and then transferred to the acceptor end of tRNA(Pro). As ProRS can inadvertently accommodate and process non-cognate amino acids such as alanine and cysteine, to avoid such errors it has two additional distinct editing activities against alanine. One activity is designated as 'pretransfer' editing and involves the tRNA(Pro)-independent hydrolysis of activated Ala-AMP. The other activity is designated 'posttransfer' editing and involves deacylation of mischarged Ala-tRNA(Pro). The misacylated Cys-tRNA(Pro) is not edited by ProRS. The sequence is that of Proline--tRNA ligase from Legionella pneumophila (strain Corby).